A 165-amino-acid chain; its full sequence is MADKFSFDIVSEVNMMEVDNAVNQARKELANRFDFKDSKSSIELNKKDKKITLIADNEYKMKALKDILEGRFAKRNVSIKSLDYKVQENAFEGYIRQTAEIISGLSSDRAKELSKLIRDSKIKVQAQIDGTKIKVISTKKDDLQLVIAYLKQLSFPLPLQFTNYR.

The protein belongs to the YajQ family.

Nucleotide-binding protein. In Endomicrobium trichonymphae, this protein is Nucleotide-binding protein TGRD_519.